The sequence spans 163 residues: Neurotrophin-3 (163 aa).

The signal sequence occupies residues 1-3 (IQS). A propeptide spanning residues 4–119 (TSMDQGILTE…VLNRTSRRKR (116 aa)) is cleaved from the precursor. Asparagine 112 is a glycosylation site (N-linked (GlcNAc...) asparagine).

It belongs to the NGF-beta family.

It is found in the secreted. Functionally, seems to promote the survival of visceral and proprioceptive sensory neurons. The sequence is that of Neurotrophin-3 (NTF3) from Chilabothrus striatus (Haitian boa constrictor).